Reading from the N-terminus, the 409-residue chain is Arginine deiminase (409 aa).

The active-site Amidino-cysteine intermediate is C399.

This sequence belongs to the arginine deiminase family.

It is found in the cytoplasm. The catalysed reaction is L-arginine + H2O = L-citrulline + NH4(+). The protein operates within amino-acid degradation; L-arginine degradation via ADI pathway; carbamoyl phosphate from L-arginine: step 1/2. The sequence is that of Arginine deiminase from Borrelia recurrentis (strain A1).